The chain runs to 196 residues: Putative 3-methyladenine DNA glycosylase (196 aa).

The protein belongs to the DNA glycosylase MPG family.

This is Putative 3-methyladenine DNA glycosylase from Bacillus licheniformis (strain ATCC 14580 / DSM 13 / JCM 2505 / CCUG 7422 / NBRC 12200 / NCIMB 9375 / NCTC 10341 / NRRL NRS-1264 / Gibson 46).